We begin with the raw amino-acid sequence, 482 residues long: Magnesium-dependent glutamate N-prenyltransferase (482 aa).

Mg(2+) contacts are provided by Asn-351, Thr-355, Glu-359, and Phe-366.

Belongs to the terpene synthase family. The cofactor is Mg(2+).

It carries out the reaction (2E)-geranyl diphosphate + L-glutamate = N-geranyl-L-glutamate + diphosphate. It functions in the pathway secondary metabolite biosynthesis. Magnesium-dependent glutamate N-prenyltransferase: part of the gene cluster that mediates the biosynthesis of domoic acid (DA) and derivatives, natural products with neurochemical activity acting as ionotropic glutamate receptor (iGluR) agonists, thus being neurotoxins causing amnesic shellfish poisoning (ASP). Catalyzes the conversion of L-glutamic acid (L-Glu) to N-geranyl-L-glutamic acid (NGG) in the presence of geranyl diphosphate (GPP). Also able to catalyze the formation of farnesyl-L-glutamate from farnesyl diphosphate (FPP). Cannot use dimethylallyl diphosphate (DMAPP) as substrate. The sequence is that of Magnesium-dependent glutamate N-prenyltransferase from Pseudo-nitzschia multiseries (Marine planktonic diatom).